We begin with the raw amino-acid sequence, 795 residues long: MGTLGKAREAPRKPCHGSRAGPKARLEAKSTNSPLPAQPSLAQITQFRMMVSLGHLAKGASLDDLIDSCIQSFDADGNLCRNNQLLQVMLTMHRIIISSAELLQKVMNLYKDALEKNSPGVCLKICYFVRYWITEFWIMFKMDASLTSTMEEFQDLVKANGEETHCHLIDTTQINSRDWSRKLTQRIKSNTSKKRKVSLLFDHLEPEELSEHLTYLEFKSFRRISFSDYQNYLVNSCVKENPTMERSIALCNGISQWVQLMVLSRPTPQLRAEVFIKFIHVAQKLHQLQNFNTLMAVIGGLCHSSISRLKETSSHVPHEINKVLGEMTELLSSCRNYDNYRRAYGECTHFKIPILGVHLKDLISLYEAMPDYLEDGKVNVQKLLALYNHINELVQLQEMAPPLDANKDLVHLLTLSLDLYYTEDEIYELSYAREPRNHRAPPLTPSKPPVVVDWASGVSPKPDPKTISKHVQRMVDSVFKNYDLDQDGYISQEEFEKIAASFPFSFCVMDKDREGLISRDEITAYFMRASSIYSKLGLGFPHNFQETTYLKPTFCDNCAGFLWGVIKQGYRCKDCGMNCHKQCKDLVVFECKKRIKSPAISTENISSVVPMSTLCPLGTKDLLHAPEEGSFIFQNGEIVDHSEESKDRTIMLLGVSSQKISVRLKRTVAHKSTQTESFPWVGGETTPGHFVLSSPRKSAQGALYVHSPASPCPSPALVRKRAFVKWENKESLIKPKPELHLRLRTYQELEQEINTLKADNDALKIQLKYAQKKIESLQLGKSNHVLAQMDHGDSA.

The span at 1–12 shows a compositional bias: basic and acidic residues; it reads MGTLGKAREAPR. The segment at 1-37 is disordered; sequence MGTLGKAREAPRKPCHGSRAGPKARLEAKSTNSPLPA. Residues 53 to 176 form the N-terminal Ras-GEF domain; that stretch reads LGHLAKGASL…HLIDTTQINS (124 aa). Residues 57–110 form a ras exchanger motif region; required for transforming activity region; sequence AKGASLDDLIDSCIQSFDADGNLCRNNQLLQVMLTMHRIIISSAELLQKVMNLY. Residue Thr184 is modified to Phosphothreonine; by PKC. Residues 205–436 enclose the Ras-GEF domain; that stretch reads EPEELSEHLT…YELSYAREPR (232 aa). 2 consecutive EF-hand domains span residues 470–505 and 506–532; these read HVQRMVDSVFKNYDLDQDGYISQEEFEKIAASFPFS and FCVMDKDREGLISRDEITAYFMRASSI. Residues Asp483, Asp485, Asp487, Tyr489, and Glu494 each contribute to the Ca(2+) site. The Phorbol-ester/DAG-type zinc finger occupies 541-591; the sequence is PHNFQETTYLKPTFCDNCAGFLWGVIKQGYRCKDCGMNCHKQCKDLVVFEC. Position 597 is a phosphoserine (Ser597). Residues 686–694 form a suppress the PT region-mediated translocation to plasma membrane region; the sequence is TPGHFVLSS. Residues 717–795 are PT region; mediates the BCR-dependent translocation to plasma membrane; that stretch reads LVRKRAFVKW…LAQMDHGDSA (79 aa). Residues 738-779 are a coiled coil; sequence ELHLRLRTYQELEQEINTLKADNDALKIQLKYAQKKIESLQL.

It belongs to the RASGRP family. Homodimer. Forms a signaling complex with DGKZ and HRAS. Interacts with F-actin. Interacts with SKAP1. In terms of tissue distribution, detected in spleen and thymus. Expressed by mature thymocytes and to a lower extent by bone marrow-derived mast cells (at protein level). Detected in B-cells and keratinocytes (at protein level).

Its subcellular location is the cytoplasm. It is found in the cytosol. The protein resides in the cell membrane. The protein localises to the golgi apparatus membrane. It localises to the endoplasmic reticulum membrane. Its activity is regulated as follows. Autoinhibited. Activated by diacylglycerol and calcium binding, which induces a conformational change releasing the autoinhibitory state. Regulated by DGKA. Regulated by DGKZ. Regulated by PLC gamma and F-actin polymerization. Its function is as follows. Functions as a calcium- and diacylglycerol (DAG)-regulated nucleotide exchange factor specifically activating Ras through the exchange of bound GDP for GTP. Activates the Erk/MAP kinase cascade. Regulates T-cell/B-cell development, homeostasis and differentiation by coupling T-lymphocyte/B-lymphocyte antigen receptors to Ras. Regulates NK cell cytotoxicity and ITAM-dependent cytokine production by activation of Ras-mediated ERK and JNK pathways. Functions in mast cell degranulation and cytokine secretion, regulating FcERI-evoked allergic responses. May also function in differentiation of other cell types. Proto-oncogene, which promotes T-cell lymphomagenesis when its expression is deregulated. The sequence is that of RAS guanyl-releasing protein 1 (Rasgrp1) from Mus musculus (Mouse).